Consider the following 198-residue polypeptide: Glycerol-3-phosphate acyltransferase (198 aa).

5 helical membrane passes run 6–26, 56–78, 83–101, 113–133, and 155–175; these read FLPVALVIGYLLGSIPFGLVL, LAAGTLLLDALKGTVAVVIAGYI, AAMAAGLGAFLGHLFPVWL, IGILLGLFWPAAVVFCLLWLA, and FLWWFGHLALSALFAVLTLLL.

The protein belongs to the PlsY family. In terms of assembly, probably interacts with PlsX.

It localises to the cell inner membrane. The enzyme catalyses an acyl phosphate + sn-glycerol 3-phosphate = a 1-acyl-sn-glycero-3-phosphate + phosphate. The protein operates within lipid metabolism; phospholipid metabolism. Functionally, catalyzes the transfer of an acyl group from acyl-phosphate (acyl-PO(4)) to glycerol-3-phosphate (G3P) to form lysophosphatidic acid (LPA). This enzyme utilizes acyl-phosphate as fatty acyl donor, but not acyl-CoA or acyl-ACP. The protein is Glycerol-3-phosphate acyltransferase of Bradyrhizobium diazoefficiens (strain JCM 10833 / BCRC 13528 / IAM 13628 / NBRC 14792 / USDA 110).